We begin with the raw amino-acid sequence, 773 residues long: Endoribonuclease YSH1 (773 aa).

The segment at 1-22 (MIPRRHHFKPAPQPTVQVLQPP) is disordered. 6 residues coordinate Zn(2+): H88, H90, D92, H93, H181, and D202. The active-site Proton donor is H421. Position 443 (H443) interacts with Zn(2+). Polar residues predominate over residues 624–637 (ASPNKHACNHSNSH). Disordered stretches follow at residues 624 to 656 (ASPN…AKDV) and 677 to 702 (EGPN…KDGD).

Belongs to the metallo-beta-lactamase superfamily. RNA-metabolizing metallo-beta-lactamase-like family. CPSF2/YSH1 subfamily.

The protein resides in the nucleus. In terms of biological role, component of the cleavage factor I (CF I) involved in pre-mRNA 3'-end processing. The chain is Endoribonuclease YSH1 (YSH1) from Cryptococcus neoformans var. neoformans serotype D (strain B-3501A) (Filobasidiella neoformans).